The chain runs to 288 residues: Bifunctional protein FolD (288 aa).

Residues 166 to 168 and I232 each bind NADP(+); that span reads GAS.

Belongs to the tetrahydrofolate dehydrogenase/cyclohydrolase family. Homodimer.

It catalyses the reaction (6R)-5,10-methylene-5,6,7,8-tetrahydrofolate + NADP(+) = (6R)-5,10-methenyltetrahydrofolate + NADPH. The enzyme catalyses (6R)-5,10-methenyltetrahydrofolate + H2O = (6R)-10-formyltetrahydrofolate + H(+). The protein operates within one-carbon metabolism; tetrahydrofolate interconversion. Catalyzes the oxidation of 5,10-methylenetetrahydrofolate to 5,10-methenyltetrahydrofolate and then the hydrolysis of 5,10-methenyltetrahydrofolate to 10-formyltetrahydrofolate. This chain is Bifunctional protein FolD, found in Escherichia coli O8 (strain IAI1).